A 309-amino-acid chain; its full sequence is Probable non-structural 36.3 kDa protein (309 aa).

This chain is Probable non-structural 36.3 kDa protein (S6), found in Avena sativa (Oat).